A 359-amino-acid polypeptide reads, in one-letter code: Putative B3 domain-containing protein At3g24850 (359 aa).

2 disordered regions span residues 92-111 (DSEI…LQNS) and 159-192 (EKME…KRTG). Residues 100 to 111 (TSDSQMKTLQNS) show a composition bias toward polar residues. Positions 250–351 (FNNLLQNDFL…VLCFAMEQSS (102 aa)) form a DNA-binding region, TF-B3.

The protein localises to the nucleus. The protein is Putative B3 domain-containing protein At3g24850 of Arabidopsis thaliana (Mouse-ear cress).